The chain runs to 379 residues: Chaperone protein DnaJ (379 aa).

The region spanning glutamate 5 to glycine 69 is the J domain. A CR-type zinc finger spans residues glycine 141–alanine 223. 8 residues coordinate Zn(2+): cysteine 154, cysteine 157, cysteine 171, cysteine 174, cysteine 197, cysteine 200, cysteine 211, and cysteine 214. 4 CXXCXGXG motif repeats span residues cysteine 154–glycine 161, cysteine 171–glycine 178, cysteine 197–glycine 204, and cysteine 211–glycine 218.

This sequence belongs to the DnaJ family. As to quaternary structure, homodimer. Zn(2+) serves as cofactor.

Its subcellular location is the cytoplasm. Functionally, participates actively in the response to hyperosmotic and heat shock by preventing the aggregation of stress-denatured proteins and by disaggregating proteins, also in an autonomous, DnaK-independent fashion. Unfolded proteins bind initially to DnaJ; upon interaction with the DnaJ-bound protein, DnaK hydrolyzes its bound ATP, resulting in the formation of a stable complex. GrpE releases ADP from DnaK; ATP binding to DnaK triggers the release of the substrate protein, thus completing the reaction cycle. Several rounds of ATP-dependent interactions between DnaJ, DnaK and GrpE are required for fully efficient folding. Also involved, together with DnaK and GrpE, in the DNA replication of plasmids through activation of initiation proteins. The protein is Chaperone protein DnaJ of Lactococcus lactis subsp. cremoris (strain MG1363).